The primary structure comprises 718 residues: Putative aminodeoxychorismate synthase (718 aa).

One can recognise a Glutamine amidotransferase type-1 domain in the interval 9-203 (QILLIDCYDS…LSLADTPNIQ (195 aa)). Cys-88 serves as the catalytic Nucleophile. Catalysis depends on residues His-177 and Glu-179. The segment at 266-718 (FLDSAKKPGR…NLKNKKRSCK (453 aa)) is PABB component.

It in the C-terminal section; belongs to the anthranilate synthase component I family.

The protein localises to the cytoplasm. Its subcellular location is the nucleus. It carries out the reaction chorismate + L-glutamine = 4-amino-4-deoxychorismate + L-glutamate. Its pathway is cofactor biosynthesis; tetrahydrofolate biosynthesis; 4-aminobenzoate from chorismate: step 1/2. Functionally, catalyzes the biosynthesis of 4-amino-4-deoxychorismate (ADC) from chorismate and glutamine. Required for the synthesis of 4-aminobenzoate (PABA), an important component in tetrahydrofolate biosynthesis. In Schizosaccharomyces pombe (strain 972 / ATCC 24843) (Fission yeast), this protein is Putative aminodeoxychorismate synthase.